Reading from the N-terminus, the 151-residue chain is MNIYKPAGFWIRLGAALLDYIIVSVPLLLIYWLITGKDPNDSMFISLVVLLYSILLPMFWRGYLIGKRICGIRIVKKDGSQVSLLTMFLRVIVAGLVYCITFGLGLIASLILIAVREDKRTLHDLIAGTYVTYATPGEEELNADEEIRKSE.

3 helical membrane-spanning segments follow: residues 14–34 (GAAL…YWLI), 45–65 (ISLV…GYLI), and 91–111 (VIVA…ASLI).

It localises to the cell membrane. This is an uncharacterized protein from Bacillus subtilis (strain 168).